Here is a 438-residue protein sequence, read N- to C-terminus: MAPVPVTASNLNTSHSEAIFSAAKALMPGGVSSPVRAFKSVGGQPIVFDRVKGPYAWDVDGNKYVDYIGSWGPAICGHAHPEVISALQEAIEKGTSFGAPCALENTLAEMVIEAVPSVEMVRFVNSGTEACMSMLRLIRAFTGRDKIIKFEGCYHGHADMFLVKAGSGVATLGLPDSPGVPRSTTANTLTAPYNDLESVKQLFAENPDAIAGVILEPIVGNAGFIQPEPGFLEGLRELTKENGALLVFDEVMTGFRISYGGAQAHFGVTPDLTTMGKVIGGGLPVGAYGGRKEIMEMVAPAGPMYQAGTLSGNPLAMTAGIKTLELLKQPGSYEKLTATTERLIQGILDAGREAGLPITGGSVGAMFGFFLCEGPVRNFEEAKATDSVRFGLLHRAMLERGVYLAPSAFEAGFTSLAHSDENIDATIQAFRDSFAAIS.

Lysine 277 bears the N6-(pyridoxal phosphate)lysine mark.

The protein belongs to the class-III pyridoxal-phosphate-dependent aminotransferase family. HemL subfamily. Homodimer. Pyridoxal 5'-phosphate is required as a cofactor.

The protein localises to the cytoplasm. It carries out the reaction (S)-4-amino-5-oxopentanoate = 5-aminolevulinate. Its pathway is porphyrin-containing compound metabolism; protoporphyrin-IX biosynthesis; 5-aminolevulinate from L-glutamyl-tRNA(Glu): step 2/2. The protein operates within porphyrin-containing compound metabolism; chlorophyll biosynthesis. This Synechococcus sp. (strain CC9311) protein is Glutamate-1-semialdehyde 2,1-aminomutase.